The chain runs to 477 residues: MPGSDTALTVDRTYSDPGRHHRCKSRVDRHDMNTLSLPLNIRRGGSDTNLNFDVPDGILDFHKVKLNADSLRQKILKVTEQIKIEQTSRDGNVAEYLKLVSSADKQQAGRIKQVFEKKNQKSAHSIAQLQKKLEQYHRKLREIEQNGVTRSSKDISKDSLKEIHHSLKDAHVKSRTAPHCLESSKSSMPGVSLTPPVFVFNKSREFANLIRNKFGSADNIAHLKNSLEEFRPEASPRAYGGSATIVNKPKYGSDDECSSGTSGSADSNGNQSFGAGGTSTLDSQGKIAKIMEELREIKVTQTQLAEDIEALKVQFKREYGFISQTLQEERYRYERLEDQLHDLTELHQHETANLKQELASAEEKVAYQAYERSRDIQEALESCQTRISKLELHQQEQQTLQTDAVNAKVLLGKCINVVLAFMTVILVCVSTLAKFVSPMMKSRSHILGTFFAVTLLAIFCKNWDHILCAIERIIIPR.

Residues 1–24 (MPGSDTALTVDRTYSDPGRHHRCK) form a disordered region. S46 bears the Phosphoserine mark. Coiled-coil stretches lie at residues 63 to 83 (KVKLNADSLRQKILKVTEQIK) and 112 to 149 (KQVFEKKNQKSAHSIAQLQKKLEQYHRKLREIEQNGVT). The segment at 234–280 (ASPRAYGGSATIVNKPKYGSDDECSSGTSGSADSNGNQSFGAGGTST) is disordered. At S253 the chain carries Phosphoserine. Positions 258–280 (SSGTSGSADSNGNQSFGAGGTST) are enriched in polar residues. A coiled-coil region spans residues 284-398 (QGKIAKIMEE…KLELHQQEQQ (115 aa)). 2 helical membrane-spanning segments follow: residues 409 to 429 (VLLGKCINVVLAFMTVILVCV) and 450 to 470 (FFAVTLLAIFCKNWDHILCAI).

This sequence belongs to the TEX28 family. May form homodimers and heterodimers with TMCC2 or TMCC3 via the coiled-coil domains. Interacts with ribosomal proteins RPL4 and RPS6.

It is found in the endoplasmic reticulum membrane. This is Transmembrane and coiled-coil domain protein 3 from Mus musculus (Mouse).